Here is a 652-residue protein sequence, read N- to C-terminus: Putative enzymatic polyprotein (652 aa).

One can recognise a Peptidase A2 domain in the interval 21–99 (YHGLFDTGAN…SPDIIIGATF (79 aa)). D26 is an active-site residue. The region spanning 231–413 (FIEEKTNFED…EKIDFLGVQI (183 aa)) is the Reverse transcriptase domain. Mg(2+) is bound by residues D301, D364, and D365.

The enzyme catalyses DNA(n) + a 2'-deoxyribonucleoside 5'-triphosphate = DNA(n+1) + diphosphate. The catalysed reaction is Endonucleolytic cleavage to 5'-phosphomonoester.. Functionally, encodes for at least two polypeptides: protease (PR) and reverse transcriptase (RT). The protease processes the polyprotein in cis. Reverse transcriptase is multifunctional enzyme that converts the viral RNA genome into dsDNA in viral cytoplasmic capsids. This enzyme displays a DNA polymerase activity that can copy either DNA or RNA templates, and a ribonuclease H (RNase H) activity that cleaves the RNA strand of RNA-DNA heteroduplexes in a partially processive 3'- to 5'-endonucleasic mode. Neo-synthesized pregenomic RNA (pgRNA) are encapsidated, and reverse-transcribed inside the nucleocapsid. Partial (+)DNA is synthesized from the (-)DNA template and generates the relaxed circular DNA (RC-DNA) genome. After budding and infection, the RC-DNA migrates in the nucleus, and is converted into a plasmid-like covalently closed circular DNA (cccDNA). The sequence is that of Putative enzymatic polyprotein from Cassava vein mosaic virus (CsVMV).